A 289-amino-acid chain; its full sequence is ATP synthase gamma chain (289 aa).

The protein belongs to the ATPase gamma chain family. As to quaternary structure, F-type ATPases have 2 components, CF(1) - the catalytic core - and CF(0) - the membrane proton channel. CF(1) has five subunits: alpha(3), beta(3), gamma(1), delta(1), epsilon(1). CF(0) has three main subunits: a, b and c.

It localises to the cell membrane. Its function is as follows. Produces ATP from ADP in the presence of a proton gradient across the membrane. The gamma chain is believed to be important in regulating ATPase activity and the flow of protons through the CF(0) complex. The chain is ATP synthase gamma chain from Hamiltonella defensa subsp. Acyrthosiphon pisum (strain 5AT).